The primary structure comprises 241 residues: Octanoyltransferase (241 aa).

The BPL/LPL catalytic domain occupies 43–228 (ADTPDEIWLV…RLTANLDGSP (186 aa)). Substrate-binding positions include 83 to 90 (RGGQITYH), 159 to 161 (ALG), and 172 to 174 (GVS). C190 functions as the Acyl-thioester intermediate in the catalytic mechanism.

This sequence belongs to the LipB family.

The protein localises to the cytoplasm. The catalysed reaction is octanoyl-[ACP] + L-lysyl-[protein] = N(6)-octanoyl-L-lysyl-[protein] + holo-[ACP] + H(+). The protein operates within protein modification; protein lipoylation via endogenous pathway; protein N(6)-(lipoyl)lysine from octanoyl-[acyl-carrier-protein]: step 1/2. In terms of biological role, catalyzes the transfer of endogenously produced octanoic acid from octanoyl-acyl-carrier-protein onto the lipoyl domains of lipoate-dependent enzymes. Lipoyl-ACP can also act as a substrate although octanoyl-ACP is likely to be the physiological substrate. This chain is Octanoyltransferase, found in Paraburkholderia phytofirmans (strain DSM 17436 / LMG 22146 / PsJN) (Burkholderia phytofirmans).